The sequence spans 115 residues: Selenoprotein K homolog (115 aa).

A helical membrane pass occupies residues 29–49 (FIWGILNQITFFFSTLIGGTV). The tract at residues 48–115 (TVEPRRRPNN…NSASGSUGPK (68 aa)) is disordered. The span at 58-84 (QGGGRRLAGFDGNGNVTGGSGVGGSGP) shows a compositional bias: gly residues. Residues 104-115 (ACNSASGSUGPK) are compositionally biased toward polar residues. Residue U112 is a non-standard amino acid, selenocysteine.

It belongs to the selenoprotein K family.

It localises to the membrane. This Dictyostelium discoideum (Social amoeba) protein is Selenoprotein K homolog (selk).